The sequence spans 353 residues: Cytochrome c biogenesis protein CcsA (353 aa).

8 consecutive transmembrane segments (helical) span residues 15–35, 37–57, 68–88, 97–117, 142–162, 261–281, 288–308, and 322–342; these read FAILFLTMLVYWGGAAFPNLP, LAALGTAGMAIANLCMATLLG, LSNLYESLFFLTWGITTVHLI, LVGVVTAPVAMLIAAFATMTL, VMMLSYSALMVGALLAIAFLI, IIGLGFPLLTIGIIAGGVWAN, WSWDPKETWALITWLVFAAYL, and AILAATGFVVVWICYLGVNLL.

This sequence belongs to the CcmF/CycK/Ccl1/NrfE/CcsA family. In terms of assembly, may interact with ccs1.

The protein resides in the cellular thylakoid membrane. In terms of biological role, required during biogenesis of c-type cytochromes (cytochrome c6 and cytochrome f) at the step of heme attachment. This Nostoc punctiforme (strain ATCC 29133 / PCC 73102) protein is Cytochrome c biogenesis protein CcsA.